A 330-amino-acid chain; its full sequence is MTSPSLLRGFGAYAPERILTNADIESMVETTDEWITTRTGIRQRHVVAPGQTTSDLAVEAARAALADAALDTADITHVLVATCTPDASCPNTACIVARKLGMTGVMALDCNAACSGFLYGLELAQGIVAARPASRVLLVAAEALSLRCNWKDRTTCVLFGDGAGATVVTADVDATQGTAVLEDSIVTSDGSLGDLLTIGGGTANPYAIGDSVGEEYFVRMQGRDVFKHAVRSMTQVCNDLLARNGFTTEDVDLVIPHQANLRIIEAVGDRLGFASEKVFVNVHDFGNTSAASIPLALADARAQGRIRPGMRVLLTTFGGGFTWGAALLRF.

Active-site residues include C114 and H257. The tract at residues 258-262 (QANLR) is ACP-binding. The active site involves N287.

This sequence belongs to the thiolase-like superfamily. FabH family. In terms of assembly, homodimer.

The protein resides in the cytoplasm. It catalyses the reaction malonyl-[ACP] + acetyl-CoA + H(+) = 3-oxobutanoyl-[ACP] + CO2 + CoA. The protein operates within lipid metabolism; fatty acid biosynthesis. Catalyzes the condensation reaction of fatty acid synthesis by the addition to an acyl acceptor of two carbons from malonyl-ACP. Catalyzes the first condensation reaction which initiates fatty acid synthesis and may therefore play a role in governing the total rate of fatty acid production. Possesses both acetoacetyl-ACP synthase and acetyl transacylase activities. Its substrate specificity determines the biosynthesis of branched-chain and/or straight-chain of fatty acids. In Nitratidesulfovibrio vulgaris (strain ATCC 29579 / DSM 644 / CCUG 34227 / NCIMB 8303 / VKM B-1760 / Hildenborough) (Desulfovibrio vulgaris), this protein is Beta-ketoacyl-[acyl-carrier-protein] synthase III.